Reading from the N-terminus, the 423-residue chain is GTPase HflX (423 aa).

Residues 201 to 363 (IQLALVGYTN…KIEQALKGMM (163 aa)) form the Hflx-type G domain. GTP-binding positions include 207 to 214 (GYTNAGKS), 232 to 236 (FATLD), 254 to 257 (DTVG), 320 to 323 (NKAD), and 341 to 343 (SAY). 2 residues coordinate Mg(2+): serine 214 and threonine 234.

The protein belongs to the TRAFAC class OBG-HflX-like GTPase superfamily. HflX GTPase family. In terms of assembly, monomer. Associates with the 50S ribosomal subunit. Mg(2+) is required as a cofactor.

The protein resides in the cytoplasm. Functionally, GTPase that associates with the 50S ribosomal subunit and may have a role during protein synthesis or ribosome biogenesis. The chain is GTPase HflX from Alkalihalophilus pseudofirmus (strain ATCC BAA-2126 / JCM 17055 / OF4) (Bacillus pseudofirmus).